Here is a 148-residue protein sequence, read N- to C-terminus: Arginine repressor (148 aa).

This sequence belongs to the ArgR family.

It localises to the cytoplasm. Its pathway is amino-acid biosynthesis; L-arginine biosynthesis [regulation]. Its function is as follows. Regulates arginine biosynthesis genes. The sequence is that of Arginine repressor from Acidobacterium capsulatum (strain ATCC 51196 / DSM 11244 / BCRC 80197 / JCM 7670 / NBRC 15755 / NCIMB 13165 / 161).